The primary structure comprises 204 residues: Transmembrane protein 186 (204 aa).

Residues 1 to 69 are Mitochondrial matrix-facing; that stretch reads MLELLCRVSP…RLVAALSRLK (69 aa). A helical membrane pass occupies residues 70–90; that stretch reads VYQAVITAAGTPIVFALGSAG. The Mitochondrial intermembrane portion of the chain corresponds to 91-95; that stretch reads QLSTD. Residues 96 to 116 form a helical membrane-spanning segment; the sequence is ALAIYAAIGVTGLITLTLASY. The Mitochondrial matrix portion of the chain corresponds to 117 to 204; it reads ASSNLVGFIY…RQLFEGLFGN (88 aa).

The protein belongs to the TMEM186 family. As to quaternary structure, associates with mitochondrial complex I assembly intermediates during its biogenesis.

It localises to the mitochondrion inner membrane. In terms of biological role, as part of the MCIA complex, required for efficient assembly of the mitochondrial complex I. The chain is Transmembrane protein 186 from Drosophila melanogaster (Fruit fly).